We begin with the raw amino-acid sequence, 839 residues long: MMSASRLAGTLIPAMAFLSCVRPESWEPCVEVVPNITYQCMELNFYKIPDNLPFSTKNLDLSFNPLRHLGSYSFFSFPELQVLDLSRCEIQTIEDGAYQSLSHLSTLILTGNPIQSLALGAFSGLSSLQKLVAVETNLASLENFPIGHLKTLKELNVAHNLIQSFKLPEYFSNLTNLEHLDLSSNKIQSIYCTDLRVLHQMPLLNLSLDLSLNPMNFIQPGAFKEIRLHKLTLRNNFDSLNVMKTCIQGLAGLEVHRLVLGEFRNEGNLEKFDKSALEGLCNLTIEEFRLAYLDYYLDDIIDLFNCLTNVSSFSLVSVTIKSVKDFSYNFGWQHLELVNCKFGQFPTLKLKSLKRLTFTSNKGGNAFSEVDLPSLEFLDLSRNGLSFKGCCSQSDFGTTSLKYLDLSFNGVITMSSNFLGLEQLEHLDFQHSNLKQMSEFSVFLSLRNLIYLDISHTHTRVAFNGIFNGLSSLEVLKMAGNSFQENFLPDIFTELRNLTFLDLSQCQLEQLSPTAFNSLSSLQVLNMSHNNFFSLDTFPYKCLNSLQVLDYSLNHIMTSKKQELQHFPSSLAFLNLTQNDFACTCEHQSFLQWIKDQRQLLVEVERMECATPSDKQGMPVLSLNITCQMNKTIIGVSVLSVLVVSVVAVLVYKFYFHLMLLAGCIKYGRGENIYDAFVIYSSQDEDWVRNELVKNLEEGVPPFQLCLHYRDFIPGVAIAANIIHEGFHKSRKVIVVVSQHFIQSRWCIFEYEIAQTWQFLSSRAGIIFIVLQKVEKTLLRRQVELYRLLSRNTYLEWEDSVLGRHIFWRRLRKALLDGKSWNPEGTVGTGCNWQEATSI.

The N-terminal stretch at Met-1 to Pro-23 is a signal peptide. Residues Glu-24–Lys-631 are Extracellular-facing. Cys-29 and Cys-40 are disulfide-bonded. An N-linked (GlcNAc...) asparagine glycan is attached at Asn-35. 5 LRR repeats span residues Ser-55–Ser-76, Glu-79–Ser-100, His-103–Gly-124, Ser-127–His-148, and Thr-151–Ser-172. Asn-173 carries N-linked (GlcNAc...) asparagine glycosylation. LRR repeat units lie at residues Asn-176–His-199, Asn-205–Glu-225, and Arg-227–Ile-247. A glycan (N-linked (GlcNAc...) asparagine) is linked at Asn-205. Cys-281 and Cys-306 are disulfide-bonded. Residues Asn-282 and Asn-309 are each glycosylated (N-linked (GlcNAc...) asparagine). LRR repeat units follow at residues Gly-331 to Lys-351, Ser-352 to Pro-373, Ser-374 to Ser-394, Ser-400 to Glu-422, Gln-423 to Leu-444, Asn-448 to His-456, Ser-472 to Leu-495, Asn-497 to Ser-518, Ser-521 to Cys-542, and Ser-545 to Gln-565. Cys-390 and Cys-391 form a disulfide bridge. N-linked (GlcNAc...) asparagine glycans are attached at residues Asn-497 and Asn-526. Asn-575 carries N-linked (GlcNAc...) asparagine glycosylation. The LRRCT domain maps to Asn-579–Met-629. Cystine bridges form between Cys-583-Cys-609 and Cys-585-Cys-627. Asn-624 and Asn-630 each carry an N-linked (GlcNAc...) asparagine glycan. The helical transmembrane segment at Thr-632 to Tyr-652 threads the bilayer. Residues Lys-653–Ile-839 are Cytoplasmic-facing. Positions Asn-672–Leu-815 constitute a TIR domain.

This sequence belongs to the Toll-like receptor family. In terms of assembly, belongs to the lipopolysaccharide (LPS) receptor, a multi-protein complex containing at least CD14, LY96 and TLR4. Binding to bacterial LPS leads to homodimerization. Interacts with LY96 via the extracellular domain. Interacts with MYD88 and TIRAP via their respective TIR domains. Interacts with NOX4. Interacts with CNPY3 and HSP90B1; this interaction is required for proper folding in the endoplasmic reticulum. Interacts with MAP3K21; this interaction leads to negative regulation of TLR4 signaling. Interacts with CD36, following CD36 stimulation by oxLDL or amyloid-beta 42, and forms a heterodimer with TLR6. The trimeric complex is internalized and triggers inflammatory response. LYN kinase activity facilitates TLR4-TLR6 heterodimerization and signal initiation. Interacts with TICAM1 in response to LPS in a WDFY1-dependent manner. Interacts with WDFY1 in response to LPS. Interacts with SMPDL3B. Interacts with CEACAM1; upon lipopolysaccharide stimulation, forms a complex including TLR4 and the phosphorylated form of SYK and CEACAM1, which in turn, recruits PTPN6 that dephosphorylates SYK, reducing the production of reactive oxygen species (ROS) and lysosome disruption, which in turn, reduces the activity of the inflammasome. Interacts with RFTN1; the interaction occurs in response to lipopolysaccharide stimulation. Interacts with SCIMP; the interaction occurs in response to lipopolysaccharide stimulation and is enhanced by phosphorylation of SCIMP by LYN. This interaction facilitates the phosphorylation of TLR4 by LYN which elicits a selective cytokine response in macrophages. Interacts with TRAF3IP3. Interacts with TREM1; this interaction enhances TLR4-mediated inflammatory response. Interacts with ZG16B/PAUF. Interacts with CD82; this interaction inhibits TLR4-mediated signaling pathway. In terms of processing, phosphorylated on tyrosine residues by LYN after binding lipopolysaccharide. Ubiquitinated by RNF128 via 'Lys-28'-linked polyubiquitin chains, leading to proteasomal degradation.

It localises to the cell membrane. Its subcellular location is the early endosome. The protein localises to the cell projection. It is found in the ruffle. Functionally, transmembrane receptor that functions as a pattern recognition receptor recognizing pathogen- and damage-associated molecular patterns (PAMPs and DAMPs) to induce innate immune responses via downstream signaling pathways. At the plasma membrane, cooperates with LY96 to mediate the innate immune response to bacterial lipopolysaccharide (LPS). Also involved in LPS-independent inflammatory responses triggered by free fatty acids, such as palmitate, and Ni(2+). Mechanistically, acts via MYD88, TIRAP and TRAF6, leading to NF-kappa-B activation, cytokine secretion and the inflammatory response. Alternatively, CD14-mediated TLR4 internalization via endocytosis is associated with the initiation of a MYD88-independent signaling via the TICAM1-TBK1-IRF3 axis leading to type I interferon production. In addition to the secretion of proinflammatory cytokines, initiates the activation of NLRP3 inflammasome and formation of a positive feedback loop between autophagy and NF-kappa-B signaling cascade. In complex with TLR6, promotes inflammation in monocytes/macrophages by associating with TLR6 and the receptor CD86. Upon ligand binding, such as oxLDL or amyloid-beta 42, the TLR4:TLR6 complex is internalized and triggers inflammatory response, leading to NF-kappa-B-dependent production of CXCL1, CXCL2 and CCL9 cytokines, via MYD88 signaling pathway, and CCL5 cytokine, via TICAM1 signaling pathway. In myeloid dendritic cells, vesicular stomatitis virus glycoprotein G but not LPS promotes the activation of IRF7, leading to type I IFN production in a CD14-dependent manner. This chain is Toll-like receptor 4 (TLR4), found in Pan paniscus (Pygmy chimpanzee).